The sequence spans 247 residues: Peptidyl-prolyl cis-trans isomerase FKBP17-2, chloroplastic (247 aa).

The transit peptide at 1 to 79 (MANLFTATAP…SSLTRRFGIG (79 aa)) directs the protein to the chloroplast. The segment at 26 to 64 (QCYASSSNPPEPESSSPPPPPPPPQPLASQQKRKKNVET) is disordered. Positions 34–51 (PPEPESSSPPPPPPPPQP) are enriched in pro residues. The PPIase FKBP-type domain maps to 141–243 (GDLVVIDLKG…EYIVEIDRVS (103 aa)).

Belongs to the FKBP-type PPIase family.

Its subcellular location is the plastid. It is found in the chloroplast thylakoid lumen. It carries out the reaction [protein]-peptidylproline (omega=180) = [protein]-peptidylproline (omega=0). In terms of biological role, PPIases accelerate the folding of proteins. It catalyzes the cis-trans isomerization of proline imidic peptide bonds in oligopeptides. This Arabidopsis thaliana (Mouse-ear cress) protein is Peptidyl-prolyl cis-trans isomerase FKBP17-2, chloroplastic (FKBP17-2).